Reading from the N-terminus, the 247-residue chain is Ras-like protein family member 11B (247 aa).

Positions 29–247 are small GTPase-like; the sequence is ASSRVIKIAV…SAKVRTATSV (219 aa). GTP is bound by residues 40–47, 87–91, and 152–155; these read GGSGVGKT, DTPGV, and NKAD. The disordered stretch occupies residues 205 to 228; sequence QNTGTPERRKNSLIPRPKSPNMQD.

Belongs to the small GTPase superfamily. Ras family.

It catalyses the reaction GTP + H2O = GDP + phosphate + H(+). The sequence is that of Ras-like protein family member 11B from Xenopus tropicalis (Western clawed frog).